Here is a 319-residue protein sequence, read N- to C-terminus: Cytochrome c biogenesis protein CcsA (319 aa).

7 consecutive transmembrane segments (helical) span residues 9-29 (ILTHISFSLVSIGITIFLITL), 44-64 (GVIGTFLCITGLLVTRWAYSG), 71-91 (LYESLLFLSWSFAIIHMFPYL), 143-163 (MVLGYAALLCGSLLSVALLVI), 225-245 (IISLGFIFLTIGILSGAVWAN), 259-273 (TWAFITWTMFAIYLH), and 286-306 (AIVAFLGFIIIWICYFGVNLL).

Belongs to the CcmF/CycK/Ccl1/NrfE/CcsA family. In terms of assembly, may interact with Ccs1.

The protein localises to the plastid. Its subcellular location is the chloroplast thylakoid membrane. Its function is as follows. Required during biogenesis of c-type cytochromes (cytochrome c6 and cytochrome f) at the step of heme attachment. This Oenothera parviflora (Small-flowered evening primrose) protein is Cytochrome c biogenesis protein CcsA.